The primary structure comprises 1780 residues: Protein TIC 214 (1780 aa).

The next 6 helical transmembrane spans lie at 19–39, 68–88, 91–111, 133–153, 176–196, and 227–247; these read IINSVVVVGLYYGFLTTFSIG, FIAGQLMMFISIYYAPLHLAL, PHTITVLALPYLLFHFFWNNN, VFLNNLIFQLFNHFILPSSML, VGWLIGHILFMKWVGLVLVWI, and IFSILLFITCVYYLGRTPSPI. A disordered region spans residues 251–275; that stretch reads KLKGTSETEERGGTKQDQEVSTEEA. The span at 254–268 shows a compositional bias: basic and acidic residues; that stretch reads GTSETEERGGTKQDQ.

Belongs to the TIC214 family. In terms of assembly, part of the Tic complex.

It localises to the plastid. The protein resides in the chloroplast inner membrane. Its function is as follows. Involved in protein precursor import into chloroplasts. May be part of an intermediate translocation complex acting as a protein-conducting channel at the inner envelope. This Draba nemorosa (Woodland whitlowgrass) protein is Protein TIC 214.